A 264-amino-acid chain; its full sequence is Thymidylate synthase (264 aa).

DUMP is bound at residue R21. Position 51 (H51) interacts with (6R)-5,10-methylene-5,6,7,8-tetrahydrofolate. 126-127 lines the dUMP pocket; the sequence is RR. The Nucleophile role is filled by C146. DUMP is bound by residues 166-169, N177, and 207-209; these read RSCD and HLY. D169 provides a ligand contact to (6R)-5,10-methylene-5,6,7,8-tetrahydrofolate. Residue A263 participates in (6R)-5,10-methylene-5,6,7,8-tetrahydrofolate binding.

This sequence belongs to the thymidylate synthase family. Bacterial-type ThyA subfamily. In terms of assembly, homodimer.

It is found in the cytoplasm. It catalyses the reaction dUMP + (6R)-5,10-methylene-5,6,7,8-tetrahydrofolate = 7,8-dihydrofolate + dTMP. The protein operates within pyrimidine metabolism; dTTP biosynthesis. Functionally, catalyzes the reductive methylation of 2'-deoxyuridine-5'-monophosphate (dUMP) to 2'-deoxythymidine-5'-monophosphate (dTMP) while utilizing 5,10-methylenetetrahydrofolate (mTHF) as the methyl donor and reductant in the reaction, yielding dihydrofolate (DHF) as a by-product. This enzymatic reaction provides an intracellular de novo source of dTMP, an essential precursor for DNA biosynthesis. The chain is Thymidylate synthase from Citrobacter koseri (strain ATCC BAA-895 / CDC 4225-83 / SGSC4696).